The sequence spans 2596 residues: Protein unc-79 homolog (2596 aa).

Serine 754 and serine 758 each carry phosphoserine. Disordered stretches follow at residues 907–931 (GPEG…TVPS), 1539–1573 (SQRQ…GFQE), 1594–1632 (VDSP…DSDS), 1648–1679 (EEEE…SVLS), 1695–1832 (KDFS…FKIQ), and 1863–1909 (LGEQ…KQIQ). The segment covering 1594–1606 (VDSPGKPAPREDL) has biased composition (basic and acidic residues). Over residues 1662–1679 (GNNAASSPSIPSQPSVLS) the composition is skewed to low complexity. Positions 1704-1713 (NHQSASNEDS) are enriched in polar residues. The span at 1726 to 1735 (ELSKSEELRE) shows a compositional bias: basic and acidic residues. The segment covering 1897–1908 (ETSSHSSISKQI) has biased composition (polar residues). 2 helical membrane-spanning segments follow: residues 2184 to 2204 (LLSF…ELCG) and 2426 to 2446 (CVLH…WTVY).

It belongs to the unc-79 family. As to quaternary structure, NALCN complex consists of NALCN and auxiliary subunits, UNC79, UNC80 and NACL1. These auxiliary subunits are essential for the NALCN channel function. UNC80 bridges NALCN to UNC79. Interacts with NALCN. Interacts with UNC80.

The protein localises to the cell membrane. Its function is as follows. Auxiliary subunit of the NALCN sodium channel complex. The NALCN sodium channel complex is a voltage-gated ion channel responsible for the resting Na(+) permeability that controls neuronal excitability. Activated by neuropeptides substance P, neurotensin, and extracellular calcium that regulates neuronal excitability by controlling the sizes of NALCN-dependent sodium-leak current. This is Protein unc-79 homolog (Unc79) from Mus musculus (Mouse).